The sequence spans 142 residues: Coactosin-like protein (142 aa).

Ala-2 is modified (N-acetylalanine). The ADF-H domain maps to Ala-2–Lys-130. Position 23 is a phosphoserine (Ser-23). Residues Thr-66–Lys-75 are flexible and important for F-actin binding. An N6-acetyllysine modification is found at Lys-102. Ser-141 is modified (phosphoserine).

Belongs to the actin-binding proteins ADF family. Coactosin subfamily. In terms of assembly, interacts with 5-lipoxygenase (ALOX5/5LO) in a calcium-independent manner. Binds to F-actin with a stoichiometry of 1:2.

The protein localises to the cytoplasm. It localises to the cytoskeleton. It is found in the nucleus. Its function is as follows. Binds to F-actin in a calcium-independent manner. Has no direct effect on actin depolymerization. Acts as a chaperone for ALOX5 (5LO), influencing both its stability and activity in leukotrienes synthesis. This is Coactosin-like protein from Rattus norvegicus (Rat).